The sequence spans 216 residues: Thiamine-phosphate synthase (216 aa).

Residues 40–44 and N72 contribute to the 4-amino-2-methyl-5-(diphosphooxymethyl)pyrimidine site; that span reads QLRIK. Mg(2+)-binding residues include D73 and D92. A 4-amino-2-methyl-5-(diphosphooxymethyl)pyrimidine-binding site is contributed by S111. 137–139 is a 2-[(2R,5Z)-2-carboxy-4-methylthiazol-5(2H)-ylidene]ethyl phosphate binding site; the sequence is TTT. K140 serves as a coordination point for 4-amino-2-methyl-5-(diphosphooxymethyl)pyrimidine. Residues G169 and 189 to 190 each bind 2-[(2R,5Z)-2-carboxy-4-methylthiazol-5(2H)-ylidene]ethyl phosphate; that span reads VS.

This sequence belongs to the thiamine-phosphate synthase family. The cofactor is Mg(2+).

The enzyme catalyses 2-[(2R,5Z)-2-carboxy-4-methylthiazol-5(2H)-ylidene]ethyl phosphate + 4-amino-2-methyl-5-(diphosphooxymethyl)pyrimidine + 2 H(+) = thiamine phosphate + CO2 + diphosphate. The catalysed reaction is 2-(2-carboxy-4-methylthiazol-5-yl)ethyl phosphate + 4-amino-2-methyl-5-(diphosphooxymethyl)pyrimidine + 2 H(+) = thiamine phosphate + CO2 + diphosphate. It catalyses the reaction 4-methyl-5-(2-phosphooxyethyl)-thiazole + 4-amino-2-methyl-5-(diphosphooxymethyl)pyrimidine + H(+) = thiamine phosphate + diphosphate. It functions in the pathway cofactor biosynthesis; thiamine diphosphate biosynthesis; thiamine phosphate from 4-amino-2-methyl-5-diphosphomethylpyrimidine and 4-methyl-5-(2-phosphoethyl)-thiazole: step 1/1. Condenses 4-methyl-5-(beta-hydroxyethyl)thiazole monophosphate (THZ-P) and 2-methyl-4-amino-5-hydroxymethyl pyrimidine pyrophosphate (HMP-PP) to form thiamine monophosphate (TMP). The chain is Thiamine-phosphate synthase from Photorhabdus laumondii subsp. laumondii (strain DSM 15139 / CIP 105565 / TT01) (Photorhabdus luminescens subsp. laumondii).